Consider the following 151-residue polypeptide: UPF0208 membrane protein YfbV (151 aa).

2 consecutive transmembrane segments (helical) span residues 46-65 (YAIR…QIAL) and 69-91 (LGPA…WWLG).

It belongs to the UPF0208 family.

The protein resides in the cell inner membrane. This Salmonella choleraesuis (strain SC-B67) protein is UPF0208 membrane protein YfbV.